The sequence spans 138 residues: Nucleoside diphosphate kinase (138 aa).

The ATP site is built by lysine 10, phenylalanine 58, arginine 86, threonine 92, arginine 103, and asparagine 113. The Pros-phosphohistidine intermediate role is filled by histidine 116.

The protein belongs to the NDK family. Homotetramer. The cofactor is Mg(2+).

Its subcellular location is the cytoplasm. It carries out the reaction a 2'-deoxyribonucleoside 5'-diphosphate + ATP = a 2'-deoxyribonucleoside 5'-triphosphate + ADP. The enzyme catalyses a ribonucleoside 5'-diphosphate + ATP = a ribonucleoside 5'-triphosphate + ADP. In terms of biological role, major role in the synthesis of nucleoside triphosphates other than ATP. The ATP gamma phosphate is transferred to the NDP beta phosphate via a ping-pong mechanism, using a phosphorylated active-site intermediate. The chain is Nucleoside diphosphate kinase from Actinobacillus pleuropneumoniae serotype 7 (strain AP76).